The sequence spans 432 residues: Anaerobic glycerol-3-phosphate dehydrogenase subunit B (432 aa).

It belongs to the anaerobic G-3-P dehydrogenase subunit B family. As to quaternary structure, composed of a catalytic GlpA/B dimer and of membrane bound GlpC. FMN is required as a cofactor.

It catalyses the reaction a quinone + sn-glycerol 3-phosphate = dihydroxyacetone phosphate + a quinol. The protein operates within polyol metabolism; glycerol degradation via glycerol kinase pathway; glycerone phosphate from sn-glycerol 3-phosphate (anaerobic route): step 1/1. Functionally, conversion of glycerol 3-phosphate to dihydroxyacetone. Uses fumarate or nitrate as electron acceptor. In Haemophilus influenzae (strain ATCC 51907 / DSM 11121 / KW20 / Rd), this protein is Anaerobic glycerol-3-phosphate dehydrogenase subunit B (glpB).